The chain runs to 236 residues: Ribonuclease 3 (236 aa).

An RNase III domain is found at 6–140; the sequence is FLDFLKQNRI…FIGAVAQDQG (135 aa). Glutamate 46 is a binding site for Mg(2+). Aspartate 50 is an active-site residue. Mg(2+) contacts are provided by aspartate 126 and glutamate 129. The active site involves glutamate 129. Positions 166 to 231 constitute a DRBM domain; sequence DYKTIFQEQA…AKNAILKLDD (66 aa).

The protein belongs to the ribonuclease III family. As to quaternary structure, homodimer. Mg(2+) serves as cofactor.

The protein localises to the cytoplasm. It carries out the reaction Endonucleolytic cleavage to 5'-phosphomonoester.. Digests double-stranded RNA. Involved in the processing of primary rRNA transcript to yield the immediate precursors to the large and small rRNAs (23S and 16S). Processes some mRNAs, and tRNAs when they are encoded in the rRNA operon. Processes pre-crRNA and tracrRNA of type II CRISPR loci if present in the organism. This Ureaplasma parvum serovar 3 (strain ATCC 700970) protein is Ribonuclease 3.